Consider the following 115-residue polypeptide: Large ribosomal subunit protein bL19 (115 aa).

The protein belongs to the bacterial ribosomal protein bL19 family.

In terms of biological role, this protein is located at the 30S-50S ribosomal subunit interface and may play a role in the structure and function of the aminoacyl-tRNA binding site. In Latilactobacillus sakei subsp. sakei (strain 23K) (Lactobacillus sakei subsp. sakei), this protein is Large ribosomal subunit protein bL19.